A 247-amino-acid polypeptide reads, in one-letter code: UPF0612 protein P20C8.01c (247 aa).

Coiled-coil stretches lie at residues 27 to 63 (IKRY…MKYE) and 138 to 225 (DTVQ…DARS).

It belongs to the UPF0612 family.

Its subcellular location is the cytoplasm. This is UPF0612 protein P20C8.01c from Schizosaccharomyces pombe (strain 972 / ATCC 24843) (Fission yeast).